Here is a 132-residue protein sequence, read N- to C-terminus: Translation initiation factor 5A (132 aa).

Hypusine is present on Lys-36.

This sequence belongs to the eIF-5A family.

The protein resides in the cytoplasm. In terms of biological role, functions by promoting the formation of the first peptide bond. In Caldivirga maquilingensis (strain ATCC 700844 / DSM 13496 / JCM 10307 / IC-167), this protein is Translation initiation factor 5A (eIF5A).